Consider the following 484-residue polypeptide: tRNA-2-methylthio-N(6)-dimethylallyladenosine synthase (484 aa).

In terms of domain architecture, MTTase N-terminal spans 36 to 153 (GKLYIKTHGC…LPELIRARRE (118 aa)). 6 residues coordinate [4Fe-4S] cluster: cysteine 45, cysteine 82, cysteine 116, cysteine 190, cysteine 194, and cysteine 197. Residues 176–415 (RAEGPSAFVS…HISAHAASIS (240 aa)) enclose the Radical SAM core domain. Residues 416–479 (QSMVGSVQRV…SNSLRGRIQL (64 aa)) enclose the TRAM domain. A disordered region spans residues 428–450 (EGPSRRDPNELTGKSENMRPVNF).

It belongs to the methylthiotransferase family. MiaB subfamily. In terms of assembly, monomer. [4Fe-4S] cluster is required as a cofactor.

It is found in the cytoplasm. It carries out the reaction N(6)-dimethylallyladenosine(37) in tRNA + (sulfur carrier)-SH + AH2 + 2 S-adenosyl-L-methionine = 2-methylsulfanyl-N(6)-dimethylallyladenosine(37) in tRNA + (sulfur carrier)-H + 5'-deoxyadenosine + L-methionine + A + S-adenosyl-L-homocysteine + 2 H(+). In terms of biological role, catalyzes the methylthiolation of N6-(dimethylallyl)adenosine (i(6)A), leading to the formation of 2-methylthio-N6-(dimethylallyl)adenosine (ms(2)i(6)A) at position 37 in tRNAs that read codons beginning with uridine. The polypeptide is tRNA-2-methylthio-N(6)-dimethylallyladenosine synthase (Xanthomonas oryzae pv. oryzae (strain PXO99A)).